Here is a 393-residue protein sequence, read N- to C-terminus: S-adenosylmethionine synthase 4 (393 aa).

Glu-9 serves as a coordination point for Mg(2+). His-15 contacts ATP. Residue Glu-43 coordinates K(+). L-methionine is bound by residues Glu-56 and Gln-99. ATP is bound by residues 167–169, 235–238, Asp-246, 252–253, Ala-269, Lys-273, and Lys-277; these read DGK, SGRF, and RK. An L-methionine-binding site is contributed by Asp-246. Lys-277 is an L-methionine binding site.

The protein belongs to the AdoMet synthase family. Homotetramer. The cofactor is Mn(2+). Requires Mg(2+) as cofactor. Co(2+) serves as cofactor. It depends on K(+) as a cofactor. Detected in trichomes (at the protein level).

The protein localises to the cytoplasm. It carries out the reaction L-methionine + ATP + H2O = S-adenosyl-L-methionine + phosphate + diphosphate. It functions in the pathway amino-acid biosynthesis; S-adenosyl-L-methionine biosynthesis; S-adenosyl-L-methionine from L-methionine: step 1/1. Catalyzes the formation of S-adenosylmethionine from methionine and ATP. The reaction comprises two steps that are both catalyzed by the same enzyme: formation of S-adenosylmethionine (AdoMet) and triphosphate, and subsequent hydrolysis of the triphosphate. The sequence is that of S-adenosylmethionine synthase 4 (METK4) from Arabidopsis thaliana (Mouse-ear cress).